The chain runs to 480 residues: Probable pectin lyase F-2 (480 aa).

An N-terminal signal peptide occupies residues 1 to 25 (MTLIRTVLMAAALLGASAHAQGVVG). C83 and C106 form a disulfide bridge. The N-linked (GlcNAc...) asparagine glycan is linked to N111. The active site involves R256. C322 and C330 are joined by a disulfide. The segment covering 386–401 (SSSAIPSSTPAPSSSA) has biased composition (low complexity). Residues 386–436 (SSSAIPSSTPAPSSSALAKRHGGHDRHGLGHIPHLTEGGPGAWHTPGPAPS) form a disordered region.

The protein belongs to the polysaccharide lyase 1 family.

It localises to the secreted. The enzyme catalyses Eliminative cleavage of (1-&gt;4)-alpha-D-galacturonan methyl ester to give oligosaccharides with 4-deoxy-6-O-methyl-alpha-D-galact-4-enuronosyl groups at their non-reducing ends.. Functionally, pectinolytic enzymes consist of four classes of enzymes: pectin lyase, polygalacturonase, pectin methylesterase and rhamnogalacturonase. Among pectinolytic enzymes, pectin lyase is the most important in depolymerization of pectin, since it cleaves internal glycosidic bonds of highly methylated pectins. This is Probable pectin lyase F-2 (pelF-2) from Aspergillus terreus (strain NIH 2624 / FGSC A1156).